The primary structure comprises 340 residues: Ketol-acid reductoisomerase (NADP(+)) (340 aa).

Residues 2–182 (AELYYDNQAD…GCTRAGVLRT (181 aa)) form the KARI N-terminal Rossmann domain. Residues 25–28 (FGSQ), Ser51, Ser53, and 83–86 (DIGQ) contribute to the NADP(+) site. The active site involves His108. An NADP(+)-binding site is contributed by Gly134. A KARI C-terminal knotted domain is found at 183–328 (TFAEETETDL…RELRRMMPFV (146 aa)). Mg(2+)-binding residues include Asp191, Glu195, Glu227, and Glu231. Position 252 (Ser252) interacts with substrate.

This sequence belongs to the ketol-acid reductoisomerase family. Mg(2+) is required as a cofactor.

The enzyme catalyses (2R)-2,3-dihydroxy-3-methylbutanoate + NADP(+) = (2S)-2-acetolactate + NADPH + H(+). It catalyses the reaction (2R,3R)-2,3-dihydroxy-3-methylpentanoate + NADP(+) = (S)-2-ethyl-2-hydroxy-3-oxobutanoate + NADPH + H(+). It participates in amino-acid biosynthesis; L-isoleucine biosynthesis; L-isoleucine from 2-oxobutanoate: step 2/4. Its pathway is amino-acid biosynthesis; L-valine biosynthesis; L-valine from pyruvate: step 2/4. In terms of biological role, involved in the biosynthesis of branched-chain amino acids (BCAA). Catalyzes an alkyl-migration followed by a ketol-acid reduction of (S)-2-acetolactate (S2AL) to yield (R)-2,3-dihydroxy-isovalerate. In the isomerase reaction, S2AL is rearranged via a Mg-dependent methyl migration to produce 3-hydroxy-3-methyl-2-ketobutyrate (HMKB). In the reductase reaction, this 2-ketoacid undergoes a metal-dependent reduction by NADPH to yield (R)-2,3-dihydroxy-isovalerate. This Chloroflexus aurantiacus (strain ATCC 29366 / DSM 635 / J-10-fl) protein is Ketol-acid reductoisomerase (NADP(+)).